The following is a 121-amino-acid chain: Ribosome-binding factor A (121 aa).

It belongs to the RbfA family. Monomer. Binds 30S ribosomal subunits, but not 50S ribosomal subunits or 70S ribosomes.

It localises to the cytoplasm. Its function is as follows. One of several proteins that assist in the late maturation steps of the functional core of the 30S ribosomal subunit. Associates with free 30S ribosomal subunits (but not with 30S subunits that are part of 70S ribosomes or polysomes). Required for efficient processing of 16S rRNA. May interact with the 5'-terminal helix region of 16S rRNA. The chain is Ribosome-binding factor A from Heliobacterium modesticaldum (strain ATCC 51547 / Ice1).